Consider the following 527-residue polypeptide: UPF0053 protein YegH (527 aa).

Helical transmembrane passes span 14–34, 51–71, 81–101, 145–165, and 185–205; these read ITLI…IAIL, LLLA…LVTL, FTFS…LFKA, ITAV…VIAI, and IVIL…AEGF. 2 consecutive CBS domains span residues 306–366 and 371–429; these read MTSR…GEPL and LIRQ…PNEV.

The protein belongs to the UPF0053 family.

The protein resides in the cell membrane. This Escherichia coli (strain K12) protein is UPF0053 protein YegH (yegH).